A 96-amino-acid polypeptide reads, in one-letter code: Co-chaperonin GroES (96 aa).

It belongs to the GroES chaperonin family. Heptamer of 7 subunits arranged in a ring. Interacts with the chaperonin GroEL.

The protein resides in the cytoplasm. Functionally, together with the chaperonin GroEL, plays an essential role in assisting protein folding. The GroEL-GroES system forms a nano-cage that allows encapsulation of the non-native substrate proteins and provides a physical environment optimized to promote and accelerate protein folding. GroES binds to the apical surface of the GroEL ring, thereby capping the opening of the GroEL channel. The chain is Co-chaperonin GroES from Geobacter sp. (strain M21).